A 631-amino-acid chain; its full sequence is 1-deoxy-D-xylulose-5-phosphate synthase (631 aa).

The interval 1–21 is disordered; sequence MPTTFHEIPRERPLTPLLDSA. Thiamine diphosphate-binding positions include His-87 and 128–130; that span reads GHS. Residue Asp-159 coordinates Mg(2+). Thiamine diphosphate contacts are provided by residues 160-161, Asn-188, Phe-295, and Glu-377; that span reads GA. Mg(2+) is bound at residue Asn-188.

The protein belongs to the transketolase family. DXPS subfamily. In terms of assembly, homodimer. The cofactor is Mg(2+). It depends on thiamine diphosphate as a cofactor.

It catalyses the reaction D-glyceraldehyde 3-phosphate + pyruvate + H(+) = 1-deoxy-D-xylulose 5-phosphate + CO2. It participates in metabolic intermediate biosynthesis; 1-deoxy-D-xylulose 5-phosphate biosynthesis; 1-deoxy-D-xylulose 5-phosphate from D-glyceraldehyde 3-phosphate and pyruvate: step 1/1. In terms of biological role, catalyzes the acyloin condensation reaction between C atoms 2 and 3 of pyruvate and glyceraldehyde 3-phosphate to yield 1-deoxy-D-xylulose-5-phosphate (DXP). The polypeptide is 1-deoxy-D-xylulose-5-phosphate synthase (Ectopseudomonas mendocina (strain ymp) (Pseudomonas mendocina)).